An 86-amino-acid polypeptide reads, in one-letter code: Small ribosomal subunit protein bS20 (86 aa).

Basic residues predominate over residues 1-11 (MANHKSALKRA). Residues 1–27 (MANHKSALKRARQNEERRIRNRARKTR) are disordered.

This sequence belongs to the bacterial ribosomal protein bS20 family.

Binds directly to 16S ribosomal RNA. This is Small ribosomal subunit protein bS20 from Syntrophobacter fumaroxidans (strain DSM 10017 / MPOB).